A 272-amino-acid polypeptide reads, in one-letter code: MAIKVVKNLVSKSKYGLKCPNPMKAEYITIHNTANDASAANEISYMKNNSSSTSFHFAVDDKQVIQGIPTNRNAWHTGDGTNGTGNRKSIGVEICYSKSGGVRYKAAEKLAIKFVAQLLKERGWGIDRVRKHQDWNGKYCPHRILSEGRWIQVKTAIEAELKKLGGKTNSSKASVAKKKTTNTSSKKTSYALPSGIFKVKSPMMRGEKVTQIQKALAALYFYPDKGAKNNGIDGVYGPKTADAIRRFQSMYGLTQDGIYGPKTKAKLEALLK.

Positions 24 to 142 constitute an N-acetylmuramoyl-L-alanine amidase domain; that stretch reads KAEYITIHNT…QDWNGKYCPH (119 aa).

Belongs to the N-acetylmuramoyl-L-alanine amidase 2 family.

The catalysed reaction is Hydrolyzes the link between N-acetylmuramoyl residues and L-amino acid residues in certain cell-wall glycopeptides.. In terms of biological role, autolysins are involved in some important biological processes such as cell separation, cell-wall turnover, competence for genetic transformation, formation of the flagella and sporulation. This chain is N-acetylmuramoyl-L-alanine amidase CwlA (cwlA), found in Bacillus subtilis (strain 168).